Here is a 232-residue protein sequence, read N- to C-terminus: uncharacterized protein (232 aa).

The N-terminal stretch at 1 to 32 is a signal peptide; that stretch reads MTTSKIATAFKTATFALAAGAVALGLASPADA.

This is an uncharacterized protein from Mycobacterium bovis (strain ATCC BAA-935 / AF2122/97).